We begin with the raw amino-acid sequence, 288 residues long: ATP synthase gamma chain (288 aa).

This sequence belongs to the ATPase gamma chain family. In terms of assembly, F-type ATPases have 2 components, CF(1) - the catalytic core - and CF(0) - the membrane proton channel. CF(1) has five subunits: alpha(3), beta(3), gamma(1), delta(1), epsilon(1). CF(0) has three main subunits: a, b and c.

Its subcellular location is the cell membrane. Its function is as follows. Produces ATP from ADP in the presence of a proton gradient across the membrane. The gamma chain is believed to be important in regulating ATPase activity and the flow of protons through the CF(0) complex. This chain is ATP synthase gamma chain, found in Bacillus pumilus (strain SAFR-032).